Here is a 46-residue protein sequence, read N- to C-terminus: MARYRRCRSRSRCRRRRRRCHRRRRRCCRRRRRRRACCRRYRCRRR.

Belongs to the protamine P1 family. As to expression, testis.

Its subcellular location is the nucleus. It localises to the chromosome. Functionally, protamines substitute for histones in the chromatin of sperm during the haploid phase of spermatogenesis. They compact sperm DNA into a highly condensed, stable and inactive complex. The polypeptide is Sperm protamine P1 (PRM1) (Hypsugo savii (Savi's pipistrelle)).